The chain runs to 454 residues: Bifunctional protein GlmU (454 aa).

The pyrophosphorylase stretch occupies residues 1 to 226 (MALNVVILAA…AIEVEGANNR (226 aa)). UDP-N-acetyl-alpha-D-glucosamine-binding positions include 8–11 (LAAG), lysine 22, glutamine 73, 78–79 (GT), 100–102 (YGD), glycine 137, glutamate 151, asparagine 166, and asparagine 224. Aspartate 102 contacts Mg(2+). Position 224 (asparagine 224) interacts with Mg(2+). The tract at residues 227–247 (VQLAQLERAYQAREAEKLMIA) is linker. Residues 248-454 (GANLRDPSRI…GWQRPVKIKK (207 aa)) form an N-acetyltransferase region. Arginine 330 and lysine 348 together coordinate UDP-N-acetyl-alpha-D-glucosamine. Residue histidine 360 is the Proton acceptor of the active site. UDP-N-acetyl-alpha-D-glucosamine-binding residues include tyrosine 363 and asparagine 374. Acetyl-CoA contacts are provided by residues alanine 377, 383–384 (NY), serine 402, alanine 420, and arginine 437.

The protein in the N-terminal section; belongs to the N-acetylglucosamine-1-phosphate uridyltransferase family. In the C-terminal section; belongs to the transferase hexapeptide repeat family. As to quaternary structure, homotrimer. Requires Mg(2+) as cofactor.

Its subcellular location is the cytoplasm. It catalyses the reaction alpha-D-glucosamine 1-phosphate + acetyl-CoA = N-acetyl-alpha-D-glucosamine 1-phosphate + CoA + H(+). It carries out the reaction N-acetyl-alpha-D-glucosamine 1-phosphate + UTP + H(+) = UDP-N-acetyl-alpha-D-glucosamine + diphosphate. The protein operates within nucleotide-sugar biosynthesis; UDP-N-acetyl-alpha-D-glucosamine biosynthesis; N-acetyl-alpha-D-glucosamine 1-phosphate from alpha-D-glucosamine 6-phosphate (route II): step 2/2. It participates in nucleotide-sugar biosynthesis; UDP-N-acetyl-alpha-D-glucosamine biosynthesis; UDP-N-acetyl-alpha-D-glucosamine from N-acetyl-alpha-D-glucosamine 1-phosphate: step 1/1. It functions in the pathway bacterial outer membrane biogenesis; LPS lipid A biosynthesis. Its function is as follows. Catalyzes the last two sequential reactions in the de novo biosynthetic pathway for UDP-N-acetylglucosamine (UDP-GlcNAc). The C-terminal domain catalyzes the transfer of acetyl group from acetyl coenzyme A to glucosamine-1-phosphate (GlcN-1-P) to produce N-acetylglucosamine-1-phosphate (GlcNAc-1-P), which is converted into UDP-GlcNAc by the transfer of uridine 5-monophosphate (from uridine 5-triphosphate), a reaction catalyzed by the N-terminal domain. The sequence is that of Bifunctional protein GlmU from Shewanella sp. (strain MR-4).